A 1056-amino-acid polypeptide reads, in one-letter code: 120.7 kDa protein in NOF-FB transposable element (1056 aa).

The disordered stretch occupies residues 716–749 (KTIKPTEGNDAEDNDTDDENKEMDLSEQPKEKPR). Over residues 724–736 (NDAEDNDTDDENK) the composition is skewed to acidic residues. Basic and acidic residues predominate over residues 737–749 (EMDLSEQPKEKPR).

The protein resides in the nucleus. Functionally, may be involved in the transposition of NOF-FB and other FB elements. The protein is 120.7 kDa protein in NOF-FB transposable element (NOF) of Drosophila melanogaster (Fruit fly).